Here is a 280-residue protein sequence, read N- to C-terminus: 4-deoxy-L-threo-5-hexosulose-uronate ketol-isomerase (280 aa).

4 residues coordinate Zn(2+): histidine 198, histidine 200, glutamate 205, and histidine 247.

This sequence belongs to the KduI family. It depends on Zn(2+) as a cofactor.

The enzyme catalyses 5-dehydro-4-deoxy-D-glucuronate = 3-deoxy-D-glycero-2,5-hexodiulosonate. The protein operates within glycan metabolism; pectin degradation; 2-dehydro-3-deoxy-D-gluconate from pectin: step 4/5. Functionally, catalyzes the isomerization of 5-dehydro-4-deoxy-D-glucuronate to 3-deoxy-D-glycero-2,5-hexodiulosonate. The polypeptide is 4-deoxy-L-threo-5-hexosulose-uronate ketol-isomerase (Lachnospira eligens (strain ATCC 27750 / DSM 3376 / VPI C15-48 / C15-B4) (Eubacterium eligens)).